We begin with the raw amino-acid sequence, 483 residues long: UDP-N-acetylmuramate--L-alanine ligase (483 aa).

An ATP-binding site is contributed by 112 to 118; the sequence is GTHGKTT.

Belongs to the MurCDEF family.

The protein resides in the cytoplasm. It carries out the reaction UDP-N-acetyl-alpha-D-muramate + L-alanine + ATP = UDP-N-acetyl-alpha-D-muramoyl-L-alanine + ADP + phosphate + H(+). It participates in cell wall biogenesis; peptidoglycan biosynthesis. In terms of biological role, cell wall formation. In Ralstonia nicotianae (strain ATCC BAA-1114 / GMI1000) (Ralstonia solanacearum), this protein is UDP-N-acetylmuramate--L-alanine ligase.